The sequence spans 418 residues: UDP-N-acetylglucosamine 1-carboxyvinyltransferase (418 aa).

22 to 23 (KN) serves as a coordination point for phosphoenolpyruvate. UDP-N-acetyl-alpha-D-glucosamine is bound at residue arginine 92. Residue cysteine 116 is the Proton donor of the active site. Cysteine 116 is subject to 2-(S-cysteinyl)pyruvic acid O-phosphothioketal. Positions 306 and 328 each coordinate UDP-N-acetyl-alpha-D-glucosamine.

This sequence belongs to the EPSP synthase family. MurA subfamily.

Its subcellular location is the cytoplasm. The enzyme catalyses phosphoenolpyruvate + UDP-N-acetyl-alpha-D-glucosamine = UDP-N-acetyl-3-O-(1-carboxyvinyl)-alpha-D-glucosamine + phosphate. It functions in the pathway cell wall biogenesis; peptidoglycan biosynthesis. Cell wall formation. Adds enolpyruvyl to UDP-N-acetylglucosamine. This Shewanella amazonensis (strain ATCC BAA-1098 / SB2B) protein is UDP-N-acetylglucosamine 1-carboxyvinyltransferase.